A 529-amino-acid polypeptide reads, in one-letter code: Probable feruloyl esterase B-1 (529 aa).

The signal sequence occupies residues 1 to 19; sequence MKISYFFVASLSYVSVARA. Disulfide bonds link C27–C75 and C63–C114. 5 N-linked (GlcNAc...) asparagine glycosylation sites follow: N53, N64, N85, N98, and N138. 4 disulfide bridges follow: C187-C445, C256-C273, C282-C295, and C505-C527. The active-site Acyl-ester intermediate is S188. N233 carries an N-linked (GlcNAc...) asparagine glycan. Positions 257, 260, 262, 264, and 266 each coordinate Ca(2+). 3 N-linked (GlcNAc...) asparagine glycosylation sites follow: N286, N290, and N354. Residues D404 and H444 each act as charge relay system in the active site.

Belongs to the tannase family.

It localises to the secreted. It catalyses the reaction feruloyl-polysaccharide + H2O = ferulate + polysaccharide.. In terms of biological role, involved in degradation of plant cell walls. Hydrolyzes the feruloyl-arabinose ester bond in arabinoxylans as well as the feruloyl-galactose and feruloyl-arabinose ester bonds in pectin. The polypeptide is Probable feruloyl esterase B-1 (faeB-1) (Aspergillus terreus (strain NIH 2624 / FGSC A1156)).